The primary structure comprises 656 residues: Protein sly1 homolog (656 aa).

4 repeat units span residues 85 to 121, 203 to 245, 419 to 456, and 460 to 496. The tract at residues 85 to 496 is 4 X approximate repeats; the sequence is DENLDRIQQD…QATQYEGGGT (412 aa).

This sequence belongs to the STXBP/unc-18/SEC1 family.

It localises to the cytoplasm. It is found in the membrane. Functionally, non-vital for development. The sequence is that of Protein sly1 homolog (Slh) from Drosophila virilis (Fruit fly).